We begin with the raw amino-acid sequence, 354 residues long: Methionine import ATP-binding protein MetN (354 aa).

In terms of domain architecture, ABC transporter spans 8 to 250 (LDHIDITFHQ…PKEALTQEFI (243 aa)). An ATP-binding site is contributed by 42–49 (GYSGAGKS).

This sequence belongs to the ABC transporter superfamily. Methionine importer (TC 3.A.1.24) family. In terms of assembly, the complex is composed of two ATP-binding proteins (MetN), two transmembrane proteins (MetI) and a solute-binding protein (MetQ).

It is found in the cell membrane. It carries out the reaction L-methionine(out) + ATP + H2O = L-methionine(in) + ADP + phosphate + H(+). The enzyme catalyses D-methionine(out) + ATP + H2O = D-methionine(in) + ADP + phosphate + H(+). Part of the ABC transporter complex MetNIQ involved in methionine import. Responsible for energy coupling to the transport system. This is Methionine import ATP-binding protein MetN from Streptococcus pyogenes serotype M4 (strain MGAS10750).